A 919-amino-acid chain; its full sequence is Beta-galactosidase 15 (919 aa).

The N-terminal stretch at 1–31 is a signal peptide; sequence MAASRGPPLLGFRALALALLLAILLLLGCSA. N-linked (GlcNAc...) asparagine glycosylation is present at Asn63. Glu220 serves as the catalytic Proton donor. Catalysis depends on Glu289, which acts as the Nucleophile. N-linked (GlcNAc...) asparagine glycans are attached at residues Asn412, Asn530, Asn546, and Asn855. In terms of domain architecture, SUEL-type lectin spans 822-907; sequence NAATPELRLQ…KDLAVEAKCS (86 aa).

This sequence belongs to the glycosyl hydrolase 35 family.

It is found in the secreted. The protein resides in the extracellular space. Its subcellular location is the apoplast. The enzyme catalyses Hydrolysis of terminal non-reducing beta-D-galactose residues in beta-D-galactosides.. The protein is Beta-galactosidase 15 of Oryza sativa subsp. japonica (Rice).